The following is a 156-amino-acid chain: Nuclear cap-binding protein subunit 2 (156 aa).

Serine 2 carries the post-translational modification N-acetylserine. Phosphoserine occurs at positions 13 and 18. MRNA contacts are provided by residues tyrosine 20, tyrosine 43, 112–116 (RTDWD), 123–127 (RQYGR), and 133–134 (QV). One can recognise an RRM domain in the interval 40–118 (CTLYVGNLSF…RIIRTDWDAG (79 aa)). Residues 124–156 (QYGRGRSGGQVRDEYRQDYDAGRGGYGKLAQNQ) form a disordered region. The span at 134–144 (VRDEYRQDYDA) shows a compositional bias: basic and acidic residues. Arginine 146 carries the post-translational modification Omega-N-methylarginine.

This sequence belongs to the RRM NCBP2 family. In terms of assembly, component of the nuclear cap-binding complex (CBC), a heterodimer composed of NCBP1/CBP80 and NCBP2/CBP20 that interacts with m7GpppG-capped RNA. Found in a U snRNA export complex with PHAX/RNUXA, NCBP1/CBP80, NCBP2/CBP20, RAN, XPO1 and m7G-capped RNA. Interacts with PHAX/RNUXA, EIF4G1, HNRNPF, HNRNPH1 and ALYREF/THOC4/ALY. Interacts with SRRT/ARS2 and KPNA3.

It localises to the nucleus. It is found in the cytoplasm. Its function is as follows. Component of the cap-binding complex (CBC), which binds co-transcriptionally to the 5' cap of pre-mRNAs and is involved in various processes such as pre-mRNA splicing, translation regulation, nonsense-mediated mRNA decay, RNA-mediated gene silencing (RNAi) by microRNAs (miRNAs) and mRNA export. The CBC complex is involved in mRNA export from the nucleus via its interaction with ALYREF/THOC4/ALY, leading to the recruitment of the mRNA export machinery to the 5' end of mRNA and to mRNA export in a 5' to 3' direction through the nuclear pore. The CBC complex is also involved in mediating U snRNA and intronless mRNAs export from the nucleus. The CBC complex is essential for a pioneer round of mRNA translation, before steady state translation when the CBC complex is replaced by cytoplasmic cap-binding protein eIF4E. The pioneer round of mRNA translation mediated by the CBC complex plays a central role in nonsense-mediated mRNA decay (NMD), NMD only taking place in mRNAs bound to the CBC complex, but not on eIF4E-bound mRNAs. The CBC complex enhances NMD in mRNAs containing at least one exon-junction complex (EJC) via its interaction with UPF1, promoting the interaction between UPF1 and UPF2. The CBC complex is also involved in 'failsafe' NMD, which is independent of the EJC complex, while it does not participate in Staufen-mediated mRNA decay (SMD). During cell proliferation, the CBC complex is also involved in microRNAs (miRNAs) biogenesis via its interaction with SRRT/ARS2, thereby being required for miRNA-mediated RNA interference. The CBC complex also acts as a negative regulator of PARN, thereby acting as an inhibitor of mRNA deadenylation. In the CBC complex, NCBP2/CBP20 recognizes and binds capped RNAs (m7GpppG-capped RNA) but requires NCBP1/CBP80 to stabilize the movement of its N-terminal loop and lock the CBC into a high affinity cap-binding state with the cap structure. The conventional cap-binding complex with NCBP2 binds both small nuclear RNA (snRNA) and messenger (mRNA) and is involved in their export from the nucleus. The polypeptide is Nuclear cap-binding protein subunit 2 (NCBP2) (Bos taurus (Bovine)).